Here is a 1084-residue protein sequence, read N- to C-terminus: Siderophore biosynthesis regulatory protein URBS1 (1084 aa).

Disordered stretches follow at residues 1–164 (MALP…QSSS), 245–283 (AEEH…RDSY), and 300–337 (RPVH…AGMR). A compositionally biased stretch (low complexity) spans 23-51 (QAAAASSSSSSSSSHHPPPRIAARPIAPA). Polar residues-rich tracts occupy residues 97–106 (SHHNASSTAT) and 128–141 (RSQS…NRSQ). Positions 150–164 (PSRSQPNSPLLQSSS) are enriched in low complexity. Over residues 245–260 (AEEHAKMQRYSDEHPR) the composition is skewed to basic and acidic residues. The GATA-type 1 zinc-finger motif lies at 338-362 (CSNCGVTSTPLWRRAPDGSTICNAC). Disordered regions lie at residues 372-405 (HRSA…REDD) and 442-472 (VSKR…KMDD). The span at 373–385 (RSASNRLSGSDAS) shows a compositional bias: polar residues. A GATA-type 2 zinc finger spans residues 482 to 506 (CTNCQTTTTPLWRRDEDGNNICNAC). Disordered stretches follow at residues 559–595 (IAPA…MREA), 643–679 (RAGA…DERD), 692–803 (THAA…TKLS), 841–940 (EAAG…SRRN), 953–1019 (AAVP…DDHW), and 1040–1084 (ARPV…APRT). 2 stretches are compositionally biased toward basic and acidic residues: residues 650-659 (RTSHPDDSRS) and 715-725 (RLGRSELHGES). A compositionally biased stretch (basic residues) spans 752-781 (PHHHHHHHHHHANHASHAVHHGHHHHHHHP). Over residues 875–888 (RGTRSGHDSIKQEA) the composition is skewed to basic and acidic residues. A compositionally biased stretch (polar residues) spans 961–970 (SPPSTVSNPA). The segment covering 1070–1084 (PVASSPSQAVSAPRT) has biased composition (low complexity).

It localises to the nucleus. Its function is as follows. Involved in the regulation of secreted ferrichrome-type siderophores. Acts directly or indirectly to repress the biosynthesis of siderophores. This chain is Siderophore biosynthesis regulatory protein URBS1 (URBS1), found in Mycosarcoma maydis (Corn smut fungus).